Here is a 44-residue protein sequence, read N- to C-terminus: Putative keratin-associated protein 20-4 (44 aa).

Belongs to the KRTAP type 20 family. As to quaternary structure, interacts with hair keratins.

In the hair cortex, hair keratin intermediate filaments are embedded in an interfilamentous matrix, consisting of hair keratin-associated proteins (KRTAP), which are essential for the formation of a rigid and resistant hair shaft through their extensive disulfide bond cross-linking with abundant cysteine residues of hair keratins. The matrix proteins include the high-sulfur and high-glycine-tyrosine keratins. This is Putative keratin-associated protein 20-4 (KRTAP20-4) from Homo sapiens (Human).